Reading from the N-terminus, the 171-residue chain is Regulatory protein RecX (171 aa).

The protein belongs to the RecX family.

It is found in the cytoplasm. Functionally, modulates RecA activity. The sequence is that of Regulatory protein RecX from Mycobacterium leprae (strain Br4923).